The sequence spans 73 residues: Defensin-like protein 10 (73 aa).

The signal sequence occupies residues 1–28; it reads MKLSLRLISALLMSVMLLFATGMGPVEA. Disulfide bonds link cysteine 31/cysteine 73, cysteine 42/cysteine 62, cysteine 48/cysteine 67, and cysteine 52/cysteine 69.

It belongs to the DEFL family.

Its subcellular location is the secreted. Confers broad-spectrum resistance to pathogens. The chain is Defensin-like protein 10 (PDF2.6) from Arabidopsis thaliana (Mouse-ear cress).